The primary structure comprises 187 residues: UPF0232 protein Mb0004 (187 aa).

2 stretches are compositionally biased toward basic and acidic residues: residues 1-17 (MTGS…ERLM) and 35-45 (AARARGQDAGR). Disordered regions lie at residues 1 to 23 (MTGS…PGLD), 35 to 75 (AARA…DPQP), and 168 to 187 (PSWR…DTYG).

The protein belongs to the UPF0232 family.

This is UPF0232 protein Mb0004 from Mycobacterium bovis (strain ATCC BAA-935 / AF2122/97).